Reading from the N-terminus, the 494-residue chain is Inosine-5'-monophosphate dehydrogenase (494 aa).

CBS domains follow at residues 93-154 (IIRN…NEKI) and 158-217 (MTTD…CKDM). NAD(+) is bound by residues aspartate 251 and 301 to 303 (GIG). Glycine 303 and glycine 305 together coordinate K(+). Serine 306 lines the IMP pocket. Position 308 (cysteine 308) interacts with K(+). The active-site Thioimidate intermediate is cysteine 308. Residues 341–343 (DGG), 364–365 (GS), and 388–392 (YRGMG) contribute to the IMP site. The Proton acceptor role is filled by arginine 406. Glutamate 421 contributes to the IMP binding site. Residues glutamate 475, serine 476, and histidine 477 each coordinate K(+).

The protein belongs to the IMPDH/GMPR family. As to quaternary structure, homotetramer. K(+) is required as a cofactor.

It carries out the reaction IMP + NAD(+) + H2O = XMP + NADH + H(+). It participates in purine metabolism; XMP biosynthesis via de novo pathway; XMP from IMP: step 1/1. Mycophenolic acid (MPA) is a non-competitive inhibitor that prevents formation of the closed enzyme conformation by binding to the same site as the amobile flap. In contrast, mizoribine monophosphate (MZP) is a competitive inhibitor that induces the closed conformation. MPA is a potent inhibitor of mammalian IMPDHs but a poor inhibitor of the bacterial enzymes. MZP is a more potent inhibitor of bacterial IMPDH. Its function is as follows. Catalyzes the conversion of inosine 5'-phosphate (IMP) to xanthosine 5'-phosphate (XMP), the first committed and rate-limiting step in the de novo synthesis of guanine nucleotides, and therefore plays an important role in the regulation of cell growth. The polypeptide is Inosine-5'-monophosphate dehydrogenase (Chlorobaculum parvum (strain DSM 263 / NCIMB 8327) (Chlorobium vibrioforme subsp. thiosulfatophilum)).